Consider the following 283-residue polypeptide: TIMELESS-interacting protein (283 aa).

The interval 1-68 (MAMIDPLENN…SSSAARKAVK (68 aa)) is disordered. Positions 15 to 24 (PDYENTEDET) are enriched in acidic residues. The interaction with TIMELESS stretch occupies residues 74–150 (LDANRLVSER…KEVQTCLKRI (77 aa)). 2 disordered regions span residues 186-205 (GNVG…EQQQ) and 217-238 (RRQA…PSYP).

It belongs to the CSM3 family. As to quaternary structure, interacts with TIMELESS, which impairs TIMELESS self-association.

It is found in the cytoplasm. The protein resides in the nucleus. Functionally, plays an important role in the control of DNA replication and the maintenance of replication fork stability. Important for cell survival after DNA damage or replication stress. May be required for the replication checkpoint induced by hydroxyurea or ultraviolet light. The protein is TIMELESS-interacting protein (TIPIN) of Gallus gallus (Chicken).